Consider the following 240-residue polypeptide: Orotidine 5'-phosphate decarboxylase (240 aa).

Substrate contacts are provided by residues aspartate 16, lysine 37, 64 to 73 (DLKFHDIPTT), threonine 128, arginine 190, glutamine 199, glycine 219, and arginine 220. The Proton donor role is filled by lysine 66.

Belongs to the OMP decarboxylase family. Type 1 subfamily. Homodimer.

It carries out the reaction orotidine 5'-phosphate + H(+) = UMP + CO2. It participates in pyrimidine metabolism; UMP biosynthesis via de novo pathway; UMP from orotate: step 2/2. In terms of biological role, catalyzes the decarboxylation of orotidine 5'-monophosphate (OMP) to uridine 5'-monophosphate (UMP). The polypeptide is Orotidine 5'-phosphate decarboxylase (Prochlorococcus marinus (strain SARG / CCMP1375 / SS120)).